Consider the following 216-residue polypeptide: RNA pyrophosphohydrolase (216 aa).

Positions 6–149 constitute a Nudix hydrolase domain; that stretch reads GFRPNVGIIL…KRDVYQLALT (144 aa). Residues 38–59 carry the Nudix box motif; that stretch reads GGIKYGETPMQAMYRELHEETG. The segment at 159-191 is disordered; sequence AQRTDKSRGPRAPRYPRVANGHAASETPAAIDT.

It belongs to the Nudix hydrolase family. RppH subfamily. Requires a divalent metal cation as cofactor.

Functionally, accelerates the degradation of transcripts by removing pyrophosphate from the 5'-end of triphosphorylated RNA, leading to a more labile monophosphorylated state that can stimulate subsequent ribonuclease cleavage. This is RNA pyrophosphohydrolase from Burkholderia pseudomallei (strain 668).